We begin with the raw amino-acid sequence, 88 residues long: DNA-directed RNA polymerase subunit omega (88 aa).

This sequence belongs to the RNA polymerase subunit omega family. As to quaternary structure, the RNAP catalytic core consists of 2 alpha, 1 beta, 1 beta' and 1 omega subunit. When a sigma factor is associated with the core the holoenzyme is formed, which can initiate transcription.

The catalysed reaction is RNA(n) + a ribonucleoside 5'-triphosphate = RNA(n+1) + diphosphate. Functionally, promotes RNA polymerase assembly. Latches the N- and C-terminal regions of the beta' subunit thereby facilitating its interaction with the beta and alpha subunits. The chain is DNA-directed RNA polymerase subunit omega from Haemophilus influenzae (strain PittEE).